The chain runs to 501 residues: Glucose-6-phosphate exchanger SLC37A2 (501 aa).

Residues 19 to 39 traverse the membrane as a helical segment; sequence SWFRGFILLLTFLIYACYHMS. Asparagine 53, asparagine 62, and asparagine 68 each carry an N-linked (GlcNAc...) asparagine glycan. 5 helical membrane-spanning segments follow: residues 88-108, 118-140, 142-164, 179-199, and 210-230; these read GAVD…SGIF, LSAG…FWNI, MLWY…WPSV, FIMG…SLIA, and SFIV…LFLI. Basic and acidic residues predominate over residues 240-252; sequence PPRHHDDPEKEQD. The interval 240–266 is disordered; that stretch reads PPRHHDDPEKEQDNPEDPVNSPYSSRE. 6 helical membrane-spanning segments follow: residues 303-323, 334-354, 362-382, 391-411, 434-454, and 462-482; these read CLLF…LYIF, GDLS…AGLI, ATTC…YNYI, IVML…ITTA, AIID…AGLI, and VFYM…RLVY.

It belongs to the major facilitator superfamily. Organophosphate:Pi antiporter (OPA) (TC 2.A.1.4) family. Highly expressed in bone marrow derived macrophages, and weakly in spleen.

The protein resides in the endoplasmic reticulum membrane. It catalyses the reaction D-glucose 6-phosphate(in) + phosphate(out) = D-glucose 6-phosphate(out) + phosphate(in). With respect to regulation, inhibited by vanadate but not by chlorogenic acid. In terms of biological role, inorganic phosphate and glucose-6-phosphate antiporter. May transport cytoplasmic glucose-6-phosphate into the lumen of the endoplasmic reticulum and translocate inorganic phosphate into the opposite direction. Independent of a lumenal glucose-6-phosphatase. May not play a role in homeostatic regulation of blood glucose levels. The protein is Glucose-6-phosphate exchanger SLC37A2 of Mus musculus (Mouse).